A 159-amino-acid chain; its full sequence is Sperm acrosome-associated protein 5 (159 aa).

An N-terminal signal peptide occupies residues 1-21 (MKAWGTVVVTLATLMVVTVDA). The region spanning 22–150 (KIYERCELAA…SEWLKGCDMH (129 aa)) is the C-type lysozyme domain. 4 disulfides stabilise this stretch: Cys-27/Cys-147, Cys-51/Cys-135, Cys-85/Cys-100, and Cys-96/Cys-114. Glu-56 is a catalytic residue.

This sequence belongs to the glycosyl hydrolase 22 family.

Its subcellular location is the secreted. It carries out the reaction Hydrolysis of (1-&gt;4)-beta-linkages between N-acetylmuramic acid and N-acetyl-D-glucosamine residues in a peptidoglycan and between N-acetyl-D-glucosamine residues in chitodextrins.. In Homo sapiens (Human), this protein is Sperm acrosome-associated protein 5 (SPACA5).